A 187-amino-acid polypeptide reads, in one-letter code: GTP cyclohydrolase 1 (187 aa).

3 residues coordinate Zn(2+): Cys76, His79, and Cys148.

The protein belongs to the GTP cyclohydrolase I family. In terms of assembly, homomer.

It carries out the reaction GTP + H2O = 7,8-dihydroneopterin 3'-triphosphate + formate + H(+). Its pathway is cofactor biosynthesis; 7,8-dihydroneopterin triphosphate biosynthesis; 7,8-dihydroneopterin triphosphate from GTP: step 1/1. The chain is GTP cyclohydrolase 1 from Desulforamulus reducens (strain ATCC BAA-1160 / DSM 100696 / MI-1) (Desulfotomaculum reducens).